The sequence spans 490 residues: MSIAICGGGIAGLSTAFYLARLIPKCTIDLYEKGPRLGGWLQSVKIPCADSPTGTVLFEQGPRTLRPAGVAGLANLDLISKLGIEDKLLRISSNSPSAKNRYIYYPDRLNEIPSSILGSIKSIMQPALRPMPLAMMLEPFRKSKRDSTDESVGSFMRRRFGKNVTDRVMSAMINGIYAGDLNDLSMHSSMFGFLAKIEKKYGNITLGLIRALLAREILSPAEKALKAALLAEPKTAELSNSMKSTSMFAFKEGIETITLSIADELKKMPNVKIHLNKPAKTLVPHKTQSLVDVNGQAYEYVVFANSSRNLENLISCPKMETPTSSVYVVNVYYKDPNVLPIRGFGLLIPSCTPNNPNHVLGIVFDSEQNNPENGSKVTVMMGGSAYTKNTSLIPTNPEEAVNNALKALQHTLKISSKPTLTNATLQQNCIPQYRVGHQDNLNSLKSWIEKNMGGRILLTGSWYNGVSIGDCIMNGHSTARKLASLMNSSS.

FAD-binding positions include 7-12 (GGGIAG), 32-33 (EK), Trp-40, 61-64 (GPRT), and 466-468 (VSI).

This sequence belongs to the protoporphyrinogen/coproporphyrinogen oxidase family. Protoporphyrinogen oxidase subfamily. Requires FAD as cofactor.

Its subcellular location is the mitochondrion. It catalyses the reaction protoporphyrinogen IX + 3 O2 = protoporphyrin IX + 3 H2O2. It functions in the pathway porphyrin-containing compound metabolism; protoporphyrin-IX biosynthesis; protoporphyrin-IX from protoporphyrinogen-IX: step 1/1. In terms of biological role, catalyzes the 6-electron oxidation of protoporphyrinogen-IX to form protoporphyrin-IX. The sequence is that of Protoporphyrinogen oxidase (hem14) from Schizosaccharomyces pombe (strain 972 / ATCC 24843) (Fission yeast).